Consider the following 394-residue polypeptide: tRNA-specific adenosine deaminase 1 (394 aa).

The A to I editase domain maps to 54–388 (SLGCGTKCIG…TKKPHELLDF (335 aa)). Histidine 78 contributes to the Zn(2+) binding site. Catalysis depends on glutamate 80, which acts as the Proton donor. 2 residues coordinate 1D-myo-inositol hexakisphosphate: arginine 84 and arginine 85. Residues cysteine 127 and cysteine 191 each contribute to the Zn(2+) site. Positions 194, 197, 320, 357, and 381 each coordinate 1D-myo-inositol hexakisphosphate.

The protein belongs to the ADAT1 family. 1D-myo-inositol hexakisphosphate serves as cofactor. Widely expressed in early embryos, and later concentrates in the central nervous system.

It catalyses the reaction adenosine(37) in tRNA(Ala) + H2O + H(+) = inosine(37) in tRNA(Ala) + NH4(+). In terms of biological role, specifically deaminates adenosine-37 to inosine in tRNA-Ala. This is tRNA-specific adenosine deaminase 1 from Drosophila melanogaster (Fruit fly).